We begin with the raw amino-acid sequence, 236 residues long: 7-cyano-7-deazaguanine synthase (236 aa).

7-17 (CSGGLDSVSLA) contributes to the ATP binding site. The Zn(2+) site is built by Cys-185, Cys-193, Cys-196, and Cys-199.

Belongs to the QueC family. The cofactor is Zn(2+).

The enzyme catalyses 7-carboxy-7-deazaguanine + NH4(+) + ATP = 7-cyano-7-deazaguanine + ADP + phosphate + H2O + H(+). Its pathway is purine metabolism; 7-cyano-7-deazaguanine biosynthesis. In terms of biological role, catalyzes the ATP-dependent conversion of 7-carboxy-7-deazaguanine (CDG) to 7-cyano-7-deazaguanine (preQ(0)). In Rhizobium rhizogenes (strain K84 / ATCC BAA-868) (Agrobacterium radiobacter), this protein is 7-cyano-7-deazaguanine synthase.